Consider the following 223-residue polypeptide: Urease accessory protein UreF (223 aa).

This sequence belongs to the UreF family. UreD, UreF and UreG form a complex that acts as a GTP-hydrolysis-dependent molecular chaperone, activating the urease apoprotein by helping to assemble the nickel containing metallocenter of UreC. The UreE protein probably delivers the nickel.

It is found in the cytoplasm. Required for maturation of urease via the functional incorporation of the urease nickel metallocenter. The polypeptide is Urease accessory protein UreF (Pseudomonas aeruginosa (strain LESB58)).